Here is a 1163-residue protein sequence, read N- to C-terminus: Actin cross-linking toxin VgrG1 (1163 aa).

The 436-residue stretch at 728-1163 folds into the ACD domain; the sequence is TPDFPTHFPK…NPQEWQRIIA (436 aa). 739–743 serves as a coordination point for ATP; the sequence is SIGIE. E743 and E805 together coordinate Mg(2+). S808 serves as a coordination point for ATP. Q889 serves as a coordination point for Mg(2+). Position 995 (R995) interacts with ATP. E1066 provides a ligand contact to Mg(2+).

Belongs to the VgrG protein family. Interacts with protein VC1417. Mg(2+) serves as cofactor.

The protein resides in the secreted. It localises to the host cytoplasm. Its subcellular location is the host cytosol. In terms of biological role, part of the type VI secretion system (T6SS) specialized secretion system, which delivers several virulence factors in both prokaryotic and eukaryotic cells during infection. Forms the spike at the tip of the elongating tube probably formed by hemolysin co-regulated protein/Hcp. Allows the delivery of the TseL antibacterial toxin to target cells where it exerts its toxicity. Also acts directly as an actin-directed toxin that catalyzes the covalent cross-linking of host cytoplasmic monomeric actin. Mediates the cross-link between 'Lys-50' of one monomer and 'Glu-270' of another actin monomer, resulting in formation of highly toxic actin oligomers that cause cell rounding. The toxin can be highly efficient at very low concentrations by acting on formin homology family proteins: toxic actin oligomers bind with high affinity to formins and adversely affect both nucleation and elongation abilities of formins, causing their potent inhibition in both profilin-dependent and independent manners. Acts as an acid--amino-acid ligase that transfers the gamma-phosphoryl group of ATP to the 'Glu-270' actin residue, resulting in the formation of an activated acyl phosphate intermediate. This intermediate is further hydrolyzed and the energy of hydrolysis is utilized for the formation of the amide bond between actin subunits. In Vibrio cholerae serotype O1 (strain ATCC 39315 / El Tor Inaba N16961), this protein is Actin cross-linking toxin VgrG1.